A 321-amino-acid polypeptide reads, in one-letter code: Ribosomal RNA small subunit methyltransferase H (321 aa).

S-adenosyl-L-methionine contacts are provided by residues 34-36 (GGH), Asp54, Phe80, Asp102, and Gln109.

Belongs to the methyltransferase superfamily. RsmH family.

It is found in the cytoplasm. It carries out the reaction cytidine(1402) in 16S rRNA + S-adenosyl-L-methionine = N(4)-methylcytidine(1402) in 16S rRNA + S-adenosyl-L-homocysteine + H(+). Functionally, specifically methylates the N4 position of cytidine in position 1402 (C1402) of 16S rRNA. The polypeptide is Ribosomal RNA small subunit methyltransferase H (Blochmanniella floridana).